The chain runs to 138 residues: Large ribosomal subunit protein bL17 (138 aa).

Belongs to the bacterial ribosomal protein bL17 family. Part of the 50S ribosomal subunit. Contacts protein L32.

This chain is Large ribosomal subunit protein bL17, found in Methylorubrum extorquens (strain PA1) (Methylobacterium extorquens).